We begin with the raw amino-acid sequence, 519 residues long: Chaperone SurA (519 aa).

Positions 1 to 31 (MMRSLHSLRRMSGTVLALMLAAGLPLSAAQA) are cleaved as a signal peptide. Composition is skewed to low complexity over residues 31 to 45 (AQPA…QKPA) and 197 to 207 (PAAAQATRAPA). Disordered stretches follow at residues 31 to 50 (AQPA…PAPS) and 196 to 221 (NPAA…PAQS). Positions 223-324 (PAMLVLAQIL…NGFHILKVVD (102 aa)) constitute a PpiC 1 domain. The disordered stretch occupies residues 328 to 361 (GGQPAQAARPAPAPAPQQPSSFQEGPSVAAPQGP). The PpiC 2 domain maps to 364–463 (VTQTHARHIL…FGWHLIQVLE (100 aa)).

Its subcellular location is the periplasm. It catalyses the reaction [protein]-peptidylproline (omega=180) = [protein]-peptidylproline (omega=0). In terms of biological role, chaperone involved in the correct folding and assembly of outer membrane proteins. Recognizes specific patterns of aromatic residues and the orientation of their side chains, which are found more frequently in integral outer membrane proteins. May act in both early periplasmic and late outer membrane-associated steps of protein maturation. This Bordetella parapertussis (strain 12822 / ATCC BAA-587 / NCTC 13253) protein is Chaperone SurA.